Consider the following 122-residue polypeptide: uncharacterized protein (122 aa).

This sequence belongs to the phage O protein family.

This is an uncharacterized protein from Escherichia coli O6:H1 (strain CFT073 / ATCC 700928 / UPEC).